We begin with the raw amino-acid sequence, 117 residues long: Ribulose bisphosphate carboxylase small subunit 1 (117 aa).

The protein belongs to the RuBisCO small chain family. Heterohexadecamer of 8 large and 8 small subunits.

Functionally, ruBisCO catalyzes two reactions: the carboxylation of D-ribulose 1,5-bisphosphate, the primary event in carbon dioxide fixation, as well as the oxidative fragmentation of the pentose substrate. Both reactions occur simultaneously and in competition at the same active site. Although the small subunit is not catalytic it is essential for maximal activity. This Hydrogenovibrio marinus protein is Ribulose bisphosphate carboxylase small subunit 1.